The following is a 585-amino-acid chain: Acetolactate synthase large subunit (585 aa).

Residue E60 participates in thiamine diphosphate binding. FAD contacts are provided by residues R162, 272-293 (HGTA…LGAR), and 315-334 (DIDP…IISD). The interval 407 to 486 (QHQMWAAQFL…IKIFIINNQW (80 aa)) is thiamine pyrophosphate binding. D457 and N484 together coordinate Mg(2+).

Belongs to the TPP enzyme family. Dimer of large and small chains. Requires Mg(2+) as cofactor. Thiamine diphosphate is required as a cofactor.

Its subcellular location is the plastid. The protein resides in the chloroplast. The catalysed reaction is 2 pyruvate + H(+) = (2S)-2-acetolactate + CO2. It functions in the pathway amino-acid biosynthesis; L-isoleucine biosynthesis; L-isoleucine from 2-oxobutanoate: step 1/4. The protein operates within amino-acid biosynthesis; L-valine biosynthesis; L-valine from pyruvate: step 1/4. This is Acetolactate synthase large subunit (ilvB) from Cyanidium caldarium (Red alga).